The primary structure comprises 229 residues: Calcyclin-binding protein (229 aa).

A2 carries the N-acetylalanine modification. Residues 2 to 81 are interaction with SIAH1; that stretch reads ASALEELQKD…YTVKISNYGW (80 aa). Residue S3 is modified to Phosphoserine. An N6-acetyllysine mark is found at K10 and K21. S36 carries the post-translational modification Phosphoserine. Residues 38–59 form a disordered region; it reads IETELRNKMQQKSQKKPEFDNE. Positions 74 to 168 constitute a CS domain; that stretch reads VKISNYGWDQ…AENTRWDYLT (95 aa). Residues 74–229 are interaction with SKP1; sequence VKISNYGWDQ…EKQAREDTEF (156 aa). K86 and K119 each carry N6-acetyllysine. Residues 155 to 229 are interaction with S100A6; it reads CRKKAENTRW…EKQAREDTEF (75 aa). Residues 169 to 229 form the SGS domain; sequence QVEKECKEKE…EKQAREDTEF (61 aa).

Component of some large E3 complex at least composed of UBE2D1, SIAH1, CACYBP/SIP, SKP1, APC and TBL1X. Interacts directly with SIAH1, SIAH2 and SKP1. Interacts with protein of the S100 family S100A1, S100A6, S100B, S100P and S100A12 in a calcium-dependent manner. Phosphorylated on serine residues. Phosphorylated upon induction by RA or at high calcium concentrations.

It is found in the nucleus. It localises to the cytoplasm. Functionally, may be involved in calcium-dependent ubiquitination and subsequent proteasomal degradation of target proteins. Probably serves as a molecular bridge in ubiquitin E3 complexes. Participates in the ubiquitin-mediated degradation of beta-catenin (CTNNB1). The polypeptide is Calcyclin-binding protein (Cacybp) (Rattus norvegicus (Rat)).